The following is a 314-amino-acid chain: BCL2/adenovirus E1B 19 kDa protein-interacting protein 2 (314 aa).

Residues methionine 1–glutamate 21 form a disordered region. Residues tryptophan 10–glutamate 21 are compositionally biased toward acidic residues. Phosphoserine is present on residues serine 41 and serine 77. The disordered stretch occupies residues glutamate 76–aspartate 100. Threonine 87 bears the Phosphothreonine mark. Phosphoserine occurs at positions 89, 92, and 114. One can recognise a CRAL-TRIO domain in the interval isoleucine 147–asparagine 304.

It is found in the cytoplasm. Its subcellular location is the perinuclear region. Its function is as follows. Implicated in the suppression of cell death. Interacts with the BCL-2 and adenovirus E1B 19 kDa proteins. The polypeptide is BCL2/adenovirus E1B 19 kDa protein-interacting protein 2 (BNIP2) (Homo sapiens (Human)).